The primary structure comprises 431 residues: Adenylosuccinate synthetase (431 aa).

GTP is bound by residues 13-19 (GDEGKGK) and 41-43 (GHT). The active-site Proton acceptor is the D14. Mg(2+) contacts are provided by D14 and G41. IMP contacts are provided by residues 14–17 (DEGK), 39–42 (NAGH), T130, R144, Q225, T240, and R304. H42 serves as the catalytic Proton donor. Substrate is bound at residue 300-306 (ATTGRER). Residues R306, 332–334 (KLD), and 415–417 (STG) contribute to the GTP site.

This sequence belongs to the adenylosuccinate synthetase family. As to quaternary structure, homodimer. Mg(2+) serves as cofactor.

It is found in the cytoplasm. The catalysed reaction is IMP + L-aspartate + GTP = N(6)-(1,2-dicarboxyethyl)-AMP + GDP + phosphate + 2 H(+). Its pathway is purine metabolism; AMP biosynthesis via de novo pathway; AMP from IMP: step 1/2. Plays an important role in the de novo pathway of purine nucleotide biosynthesis. Catalyzes the first committed step in the biosynthesis of AMP from IMP. This chain is Adenylosuccinate synthetase, found in Colwellia psychrerythraea (strain 34H / ATCC BAA-681) (Vibrio psychroerythus).